The primary structure comprises 351 residues: Lipopolysaccharide core biosynthesis mannosyltransferase LpsB (351 aa).

Belongs to the glycosyltransferase group 1 family. Glycosyltransferase 4 subfamily.

It functions in the pathway bacterial outer membrane biogenesis; LPS core biosynthesis. In terms of biological role, acts at transfer of mannose group to a 3-deoxy-D-mono octulonic acid (KDO) via an alpha-1,5 linkage. The polypeptide is Lipopolysaccharide core biosynthesis mannosyltransferase LpsB (lpsB) (Rhizobium meliloti (strain 1021) (Ensifer meliloti)).